The following is a 393-amino-acid chain: NAD(P)H-quinone oxidoreductase subunit H, chloroplastic (393 aa).

The protein belongs to the complex I 49 kDa subunit family. As to quaternary structure, NDH is composed of at least 16 different subunits, 5 of which are encoded in the nucleus.

Its subcellular location is the plastid. The protein resides in the chloroplast thylakoid membrane. It carries out the reaction a plastoquinone + NADH + (n+1) H(+)(in) = a plastoquinol + NAD(+) + n H(+)(out). It catalyses the reaction a plastoquinone + NADPH + (n+1) H(+)(in) = a plastoquinol + NADP(+) + n H(+)(out). Functionally, NDH shuttles electrons from NAD(P)H:plastoquinone, via FMN and iron-sulfur (Fe-S) centers, to quinones in the photosynthetic chain and possibly in a chloroplast respiratory chain. The immediate electron acceptor for the enzyme in this species is believed to be plastoquinone. Couples the redox reaction to proton translocation, and thus conserves the redox energy in a proton gradient. The chain is NAD(P)H-quinone oxidoreductase subunit H, chloroplastic from Solanum tuberosum (Potato).